A 229-amino-acid polypeptide reads, in one-letter code: Ribonuclease HII (229 aa).

The RNase H type-2 domain occupies 34-223 (WPVAGADEAG…LRKVEDGPQM (190 aa)). A divalent metal cation contacts are provided by D40, E41, and D131.

The protein belongs to the RNase HII family. Mn(2+) serves as cofactor. Mg(2+) is required as a cofactor.

The protein resides in the cytoplasm. It catalyses the reaction Endonucleolytic cleavage to 5'-phosphomonoester.. Functionally, endonuclease that specifically degrades the RNA of RNA-DNA hybrids. This Rhizobium leguminosarum bv. trifolii (strain WSM2304) protein is Ribonuclease HII.